The chain runs to 93 residues: Small ribosomal subunit protein uS19 (93 aa).

Belongs to the universal ribosomal protein uS19 family.

Protein S19 forms a complex with S13 that binds strongly to the 16S ribosomal RNA. This is Small ribosomal subunit protein uS19 from Lactobacillus helveticus (strain DPC 4571).